The primary structure comprises 294 residues: Cytidine deaminase (294 aa).

2 CMP/dCMP-type deaminase domains span residues 48-168 and 186-294; these read DEDA…FGPK and LTGN…VLLG. 89-91 serves as a coordination point for substrate; the sequence is NME. His-102 serves as a coordination point for Zn(2+). Glu-104 (proton donor) is an active-site residue. Zn(2+) is bound by residues Cys-129 and Cys-132.

The protein belongs to the cytidine and deoxycytidylate deaminase family. In terms of assembly, homodimer. It depends on Zn(2+) as a cofactor.

The catalysed reaction is cytidine + H2O + H(+) = uridine + NH4(+). It carries out the reaction 2'-deoxycytidine + H2O + H(+) = 2'-deoxyuridine + NH4(+). In terms of biological role, this enzyme scavenges exogenous and endogenous cytidine and 2'-deoxycytidine for UMP synthesis. This chain is Cytidine deaminase, found in Salmonella typhi.